We begin with the raw amino-acid sequence, 341 residues long: S-adenosylmethionine:tRNA ribosyltransferase-isomerase (341 aa).

This sequence belongs to the QueA family. As to quaternary structure, monomer.

The protein localises to the cytoplasm. The enzyme catalyses 7-aminomethyl-7-carbaguanosine(34) in tRNA + S-adenosyl-L-methionine = epoxyqueuosine(34) in tRNA + adenine + L-methionine + 2 H(+). It functions in the pathway tRNA modification; tRNA-queuosine biosynthesis. Its function is as follows. Transfers and isomerizes the ribose moiety from AdoMet to the 7-aminomethyl group of 7-deazaguanine (preQ1-tRNA) to give epoxyqueuosine (oQ-tRNA). The polypeptide is S-adenosylmethionine:tRNA ribosyltransferase-isomerase (Staphylococcus epidermidis (strain ATCC 35984 / DSM 28319 / BCRC 17069 / CCUG 31568 / BM 3577 / RP62A)).